A 570-amino-acid chain; its full sequence is Urease subunit alpha (570 aa).

A Urease domain is found at 131-570; sequence GGMDSHIHFI…LPMAQRYFLF (440 aa). Residues His-136, His-138, and Lys-219 each contribute to the Ni(2+) site. Lys-219 bears the N6-carboxylysine mark. His-221 serves as a coordination point for substrate. Positions 248 and 274 each coordinate Ni(2+). The Proton donor role is filled by His-322. Ni(2+) is bound at residue Asp-362.

The protein belongs to the metallo-dependent hydrolases superfamily. Urease alpha subunit family. Heterotrimer of UreA (gamma), UreB (beta) and UreC (alpha) subunits. Three heterotrimers associate to form the active enzyme. Ni cation serves as cofactor. Post-translationally, carboxylation allows a single lysine to coordinate two nickel ions.

The protein localises to the cytoplasm. The catalysed reaction is urea + 2 H2O + H(+) = hydrogencarbonate + 2 NH4(+). It participates in nitrogen metabolism; urea degradation; CO(2) and NH(3) from urea (urease route): step 1/1. This Rhizobium etli (strain ATCC 51251 / DSM 11541 / JCM 21823 / NBRC 15573 / CFN 42) protein is Urease subunit alpha.